The primary structure comprises 85 residues: MKTVIFLIVSSLLLIGVKTDNGYLLDKYTGCKVWCVINNESCNSECKIRGGYYGYCYFWKLACFCQGARKSELWNYNTNKCNGKL.

Positions 1-19 (MKTVIFLIVSSLLLIGVKT) are cleaved as a signal peptide. Positions 20 to 82 (DNGYLLDKYT…LWNYNTNKCN (63 aa)) constitute an LCN-type CS-alpha/beta domain. 4 disulfides stabilise this stretch: C31-C81, C35-C56, C42-C63, and C46-C65.

As to expression, expressed by the venom gland.

Its subcellular location is the secreted. Beta toxins bind voltage-independently at site-4 of sodium channels (Nav) and shift the voltage of activation toward more negative potentials thereby affecting sodium channel activation and promoting spontaneous and repetitive firing. It binds to distinct receptor sites of mammal and insect voltage-gated sodium channels. It displays antinociceptive effect in rat models, which is due to its specific modulation of sodium channels of sensory neurons. It also significantly stimulates the binding of [3H]-ryanodine to ryanodine receptors on the sarcoplasmic reticulum of the skeletal muscle through an indirect mechanism. And it promotes noradrenaline release from the rat hippocampus slice. This chain is Beta-toxin BmKAS, found in Olivierus martensii (Manchurian scorpion).